The following is a 328-amino-acid chain: tRNA uridine(34) hydroxylase (328 aa).

A Rhodanese domain is found at 130 to 224 (LDKDTVVLDT…YGKDPEVQGE (95 aa)). The Cysteine persulfide intermediate role is filled by Cys-184.

The protein belongs to the TrhO family.

The catalysed reaction is uridine(34) in tRNA + AH2 + O2 = 5-hydroxyuridine(34) in tRNA + A + H2O. Its function is as follows. Catalyzes oxygen-dependent 5-hydroxyuridine (ho5U) modification at position 34 in tRNAs. The protein is tRNA uridine(34) hydroxylase of Streptococcus pneumoniae (strain P1031).